We begin with the raw amino-acid sequence, 591 residues long: CTP synthase 1 (591 aa).

Lysine 100 carries the post-translational modification N6-acetyllysine. Positions 300–554 constitute a Glutamine amidotransferase type-1 domain; that stretch reads SIALVGKYTK…LASVGRLSHY (255 aa). Catalysis depends on for GATase activity residues cysteine 399, histidine 526, and glutamate 528. 8 positions are modified to phosphoserine: serine 562, serine 568, serine 571, serine 573, serine 574, serine 575, serine 578, and serine 587. The tract at residues 562–591 is disordered; sequence SPRDTYSDRSGSSSPDSEITELKFPSINHD. Over residues 569-578 the composition is skewed to low complexity; sequence DRSGSSSPDS.

Belongs to the CTP synthase family. As to expression, widely expressed.

It is found in the cytoplasm. It localises to the cytosol. The enzyme catalyses UTP + L-glutamine + ATP + H2O = CTP + L-glutamate + ADP + phosphate + 2 H(+). It participates in pyrimidine metabolism; CTP biosynthesis via de novo pathway; CTP from UDP: step 2/2. Activated by GTP and inhibited by CTP. Functionally, this enzyme is involved in the de novo synthesis of CTP, a precursor of DNA, RNA and phospholipids. Catalyzes the ATP-dependent amination of UTP to CTP with either L-glutamine or ammonia as a source of nitrogen. This enzyme and its product, CTP, play a crucial role in the proliferation of activated lymphocytes and therefore in immunity. In Homo sapiens (Human), this protein is CTP synthase 1.